Here is a 113-residue protein sequence, read N- to C-terminus: UPF0122 protein LCA_0713 (113 aa).

It belongs to the UPF0122 family.

Its function is as follows. Might take part in the signal recognition particle (SRP) pathway. This is inferred from the conservation of its genetic proximity to ftsY/ffh. May be a regulatory protein. The protein is UPF0122 protein LCA_0713 of Latilactobacillus sakei subsp. sakei (strain 23K) (Lactobacillus sakei subsp. sakei).